We begin with the raw amino-acid sequence, 330 residues long: Ketol-acid reductoisomerase (NADP(+)) (330 aa).

The region spanning 3-184 (LPVYYDKDID…GGGRMGVLET (182 aa)) is the KARI N-terminal Rossmann domain. Residues 26 to 29 (YGVQ), serine 52, and serine 54 contribute to the NADP(+) site. Histidine 109 is a catalytic residue. Glycine 135 serves as a coordination point for NADP(+). Residues 185 to 329 (SFKEECESDL…EILRAPFNHK (145 aa)) enclose the KARI C-terminal knotted domain. Residues aspartate 193, glutamate 197, glutamate 229, and glutamate 233 each coordinate Mg(2+). Serine 254 serves as a coordination point for substrate.

This sequence belongs to the ketol-acid reductoisomerase family. It depends on Mg(2+) as a cofactor.

The enzyme catalyses (2R)-2,3-dihydroxy-3-methylbutanoate + NADP(+) = (2S)-2-acetolactate + NADPH + H(+). The catalysed reaction is (2R,3R)-2,3-dihydroxy-3-methylpentanoate + NADP(+) = (S)-2-ethyl-2-hydroxy-3-oxobutanoate + NADPH + H(+). Its pathway is amino-acid biosynthesis; L-isoleucine biosynthesis; L-isoleucine from 2-oxobutanoate: step 2/4. It functions in the pathway amino-acid biosynthesis; L-valine biosynthesis; L-valine from pyruvate: step 2/4. Involved in the biosynthesis of branched-chain amino acids (BCAA). Catalyzes an alkyl-migration followed by a ketol-acid reduction of (S)-2-acetolactate (S2AL) to yield (R)-2,3-dihydroxy-isovalerate. In the isomerase reaction, S2AL is rearranged via a Mg-dependent methyl migration to produce 3-hydroxy-3-methyl-2-ketobutyrate (HMKB). In the reductase reaction, this 2-ketoacid undergoes a metal-dependent reduction by NADPH to yield (R)-2,3-dihydroxy-isovalerate. In Helicobacter pylori (strain J99 / ATCC 700824) (Campylobacter pylori J99), this protein is Ketol-acid reductoisomerase (NADP(+)).